Consider the following 409-residue polypeptide: O-methyltransferase pyiA (409 aa).

The segment covering 1-21 (MASQDGTTELLSQSVNSTCIP) has biased composition (polar residues). The segment at 1–46 (MASQDGTTELLSQSVNSTCIPGSTYHVDRGRASSASTPPTSPPLSE) is disordered. Aspartate 271 serves as a coordination point for S-adenosyl-L-methionine. Histidine 317 functions as the Proton acceptor in the catalytic mechanism.

This sequence belongs to the class I-like SAM-binding methyltransferase superfamily. Cation-independent O-methyltransferase family.

It participates in mycotoxin biosynthesis. In terms of biological role, O-methyltransferase; part of the gene cluster that mediates the biosynthesis of the mycotoxin pyrichalasin H, a tyrosine-derived cytochalasan that inhibits the growth of rice seedlings, but also inhibits lymphocyte capping and actin polymerization and alters cell morphology. Pyrichalasin H is indicated as the responsible agent for the genus-specific pathogenicity of M.grisea toward crabgrass. The first step in the pathway is catalyzed by the O-methyltransferase pyiA which methylates free tyrosine to generate the precursor O-methyltyrosine. The hybrid PKS-NRPS pyiS, assisted by the enoyl reductase pyiC, are responsible for fusion of the O-methyltyrosine precursor and the polyketide backbone. The polyketide synthase module (PKS) of pyiS is responsible for the synthesis of the polyketide backbone and the downstream nonribosomal peptide synthetase (NRPS) amidates the carboxyl end of the polyketide with the O-methyltyrosine precursor. As the NRPS A-domain demonstrates substrate tolerance, pyiS can also use phenylalanine, tyrosine and even para-chlorophenylalanine as amino acid precursor, which leads to the production of novel cytochalasans, including halogenated cytochalasans. Because pyiS lacks a designated enoylreductase (ER) domain, the required activity is provided the enoyl reductase pyiC. Reduction by the hydrolyase pyiE leads to 1,5-dihydropyrrolone, which is substrate for dehydration and intra-molecular Diels-Alder cyclization by the Diels-Alderase pyiF to yield the required isoindolone-fused macrocycle. The tailoring cytochrome P450 monooxygenases piyD and piyG catalyze the hydroxylation at C-18 and C-7, respectivily, whereas the short-chain dehydrogenase/reductase pyiH reduces the carbonyl at C-21 in preparation for the transfer of an acetyl group by the acetyltransferase pyiB. These 3 reactions whose order is not clear yet, lead to the production of O-methylpyrichalasin J, a deacetylated pyrichalasin H. Finally, pyiB to converts O-methylpyrichalasin J into the final product pyrichalasin H via acetylation of C-21. This is O-methyltransferase pyiA from Pyricularia grisea (Crabgrass-specific blast fungus).